The chain runs to 513 residues: Bifunctional pantoate ligase/cytidylate kinase (513 aa).

The segment at 1–282 (MGTFHRLTTT…VGQTRLIDNC (282 aa)) is pantoate--beta-alanine ligase. 32 to 39 (MGALHGGH) serves as a coordination point for ATP. H39 (proton donor) is an active-site residue. Q63 contacts (R)-pantoate. Q63 serves as a coordination point for beta-alanine. 152–155 (GQKD) serves as a coordination point for ATP. Q158 provides a ligand contact to (R)-pantoate. ATP contacts are provided by residues V181 and 189-192 (LSSR). The tract at residues 283 to 513 (LLDRRRPILA…HLYRSRFPQP (231 aa)) is cytidylate kinase.

The protein in the N-terminal section; belongs to the pantothenate synthetase family. It in the C-terminal section; belongs to the cytidylate kinase family. Type 1 subfamily.

It localises to the cytoplasm. The catalysed reaction is (R)-pantoate + beta-alanine + ATP = (R)-pantothenate + AMP + diphosphate + H(+). It carries out the reaction CMP + ATP = CDP + ADP. The enzyme catalyses dCMP + ATP = dCDP + ADP. It participates in cofactor biosynthesis; (R)-pantothenate biosynthesis; (R)-pantothenate from (R)-pantoate and beta-alanine: step 1/1. Functionally, catalyzes the condensation of pantoate with beta-alanine in an ATP-dependent reaction via a pantoyl-adenylate intermediate. Catalyzes the transfer of a phosphate group from ATP to either CMP or dCMP to form CDP or dCDP and ADP, respectively. This chain is Bifunctional pantoate ligase/cytidylate kinase, found in Thermosynechococcus vestitus (strain NIES-2133 / IAM M-273 / BP-1).